The primary structure comprises 293 residues: Haloalkane dehalogenase (293 aa).

The AB hydrolase-1 domain occupies 34–158; the sequence is PVLFLHGNPT…FQAFRTADVG (125 aa). Asp-106 serves as the catalytic Nucleophile. The active-site Proton donor is Glu-130. Residue His-272 is the Proton acceptor of the active site.

This sequence belongs to the haloalkane dehalogenase family. Type 2 subfamily. Monomer.

The enzyme catalyses 1-haloalkane + H2O = a halide anion + a primary alcohol + H(+). It functions in the pathway xenobiotic degradation; haloalkane degradation. Its pathway is xenobiotic degradation; 1,3-dichloropropene degradation. Functionally, catalyzes hydrolytic cleavage of carbon-halogen bonds in halogenated aliphatic compounds, leading to the formation of the corresponding primary alcohols, halide ions and protons. Has a broad substrate specificity, as it is able to dehalogenate mono- and di- chlorinated and brominated alkanes (up to at least C10), and the two isomers of 1,3-dichloropropene to 3-chloroallyl alcohol; the highest activity was found with 1,2-dibromoethane, while no activity was observed with the analog 1,2-dichloroethane. The polypeptide is Haloalkane dehalogenase (dhaA) (Pseudomonas pavonaceae).